Reading from the N-terminus, the 591-residue chain is Serine/threonine-protein kinase PAK 4 (591 aa).

Residues 11–24 (ISAPSNFEHRVHTG) form the CRIB domain. Residues 25 to 320 (FDQHEQKFTG…VVDPGDPRSY (296 aa)) form a linker region. S41 carries the phosphoserine modification. K78 is modified (N6-methyllysine). The tract at residues 95 to 301 (TRSNSLRRDS…PQREPQRVSH (207 aa)) is disordered. Residues S104 and S148 each carry the phosphoserine modification. A compositionally biased stretch (basic and acidic residues) spans 149 to 164 (GDRRRAGPEKRPKSSR). Residues S167 and S181 each carry the phosphoserine modification. T187 carries the phosphothreonine modification. Residues 191–202 (AGLASGAKLAAG) show a composition bias toward low complexity. S195 carries the post-translational modification Phosphoserine. T207 bears the Phosphothreonine mark. Low complexity predominate over residues 242 to 260 (SSSSSSRPPTRARGAPSPG). S258 and S267 each carry phosphoserine. The segment covering 271–290 (LAPPACTPAAPAVPGPPGPR) has biased composition (pro residues). At S291 the chain carries Phosphoserine. Basic and acidic residues predominate over residues 292–301 (PQREPQRVSH). A GEF-interaction domain (GID) region spans residues 298 to 323 (RVSHEQFRAALQLVVDPGDPRSYLDN). A Protein kinase domain is found at 321 to 572 (LDNFIKIGEG…AAELLKHPFL (252 aa)). ATP is bound by residues 327–335 (IGEGSTGIV), K350, and 396–398 (EFL). D440 functions as the Proton acceptor in the catalytic mechanism. Residue 458 to 460 (DFG) coordinates ATP. Position 474 is a phosphoserine; by autocatalysis (S474).

Belongs to the protein kinase superfamily. STE Ser/Thr protein kinase family. STE20 subfamily. In terms of assembly, interacts with FGFR2 and GRB2. Interacts tightly with GTP-bound but not GDP-bound CDC42/p21 and weakly with RAC1. Interacts with INKA1. Interacts with SH3RF2. Interacts with RHOU and PAXI; the PAK4-RHOU complex protects RHOU from ubiquitination and acts as a scaffold to suppport paxillin/PAXI phosphorylation. In terms of processing, autophosphorylated on serine residues when activated by CDC42/p21. Phosphorylated on tyrosine residues upon stimulation of FGFR2. Methylated by SETD6. Polyubiquitinated, leading to its proteasomal degradation. As to expression, highest expression in prostate, testis and colon.

Its subcellular location is the cytoplasm. The enzyme catalyses L-seryl-[protein] + ATP = O-phospho-L-seryl-[protein] + ADP + H(+). It carries out the reaction L-threonyl-[protein] + ATP = O-phospho-L-threonyl-[protein] + ADP + H(+). Inhibited by INKA1; which inhibits the serine/threonine-protein kinase activity by binding PAK4 in a substrate-like manner. Serine/threonine-protein kinase that plays a role in a variety of different signaling pathways including cytoskeleton regulation, cell adhesion turnover, cell migration, growth, proliferation or cell survival. Activation by various effectors including growth factor receptors or active CDC42 and RAC1 results in a conformational change and a subsequent autophosphorylation on several serine and/or threonine residues. Phosphorylates and inactivates the protein phosphatase SSH1, leading to increased inhibitory phosphorylation of the actin binding/depolymerizing factor cofilin. Decreased cofilin activity may lead to stabilization of actin filaments. Phosphorylates LIMK1, a kinase that also inhibits the activity of cofilin. Phosphorylates integrin beta5/ITGB5 and thus regulates cell motility. Phosphorylates ARHGEF2 and activates the downstream target RHOA that plays a role in the regulation of assembly of focal adhesions and actin stress fibers. Stimulates cell survival by phosphorylating the BCL2 antagonist of cell death BAD. Alternatively, inhibits apoptosis by preventing caspase-8 binding to death domain receptors in a kinase independent manner. Plays a role in cell-cycle progression by controlling levels of the cell-cycle regulatory protein CDKN1A and by phosphorylating RAN. Promotes kinase-independent stabilization of RHOU, thereby contributing to focal adhesion disassembly during cell migration. This is Serine/threonine-protein kinase PAK 4 from Homo sapiens (Human).